The following is a 101-amino-acid chain: Putative septation protein SpoVG (101 aa).

This sequence belongs to the SpoVG family.

Functionally, could be involved in septation. The sequence is that of Putative septation protein SpoVG from Staphylococcus saprophyticus subsp. saprophyticus (strain ATCC 15305 / DSM 20229 / NCIMB 8711 / NCTC 7292 / S-41).